A 463-amino-acid polypeptide reads, in one-letter code: MGYPGQRPVIPPQSHRDDRETLVSEHKHKGKTCRQSAAVFNVVNSIIGSGIIGLPYSMKQAGFPLGILLLFWVSYVTDFSLILLIKGAALSGTDTYQSLVNRTFGFPGYLLLSVLQFLYPFIAMISYNIITGDTLSKVFQRIPGVDPENLLIGRHLIIVLSTVVFTLPLSLYRDIAKLGKISLISTVLTTLILGIVVARGVSLGPHIPKTEDAWIFAKPNAVQAVGVMSFAFICHHNCFLVYGSLEEPTVAKWSHIIHVSTLISVFISILFATCGYLTFTGYTQGDLFENYCRNDDLVTFGRFCYGVTVILTYPIECFVTREVIANVFFGGNLSSVCHIIVTVVIITVATLVSLLIDCLGIVLELNGVLCAAPLIFIIPSACYLKLSEEPRTHSDKIMSCVMLPIGAVVMAVGFVMAVTSPQDCSHGQEMFYCSPDNFSLTNISISHFQLTTQLSILNVSIFQ.

The segment at methionine 1–lysine 27 is disordered. Positions serine 14 to glutamate 25 are enriched in basic and acidic residues. Helical transmembrane passes span alanine 38–methionine 58, leucine 65–isoleucine 85, glycine 105–isoleucine 125, leucine 150–serine 170, leucine 178–alanine 198, valine 225–leucine 245, isoleucine 256–tyrosine 276, valine 298–threonine 320, valine 336–isoleucine 356, cysteine 358–isoleucine 378, and isoleucine 397–alanine 417. N-linked (GlcNAc...) asparagine glycans are attached at residues asparagine 437, asparagine 442, and asparagine 458.

The protein belongs to the amino acid/polyamine transporter 2 family.

The protein resides in the membrane. Its function is as follows. Putative sodium-dependent amino acid/proton antiporter. The protein is Putative sodium-coupled neutral amino acid transporter 11 (SLC38A11) of Bos taurus (Bovine).